We begin with the raw amino-acid sequence, 389 residues long: Succinate--CoA ligase [ADP-forming] subunit beta (389 aa).

Residues K46, 53-55 (GRG), E99, C102, and E107 contribute to the ATP site. The Mg(2+) site is built by N199 and D213. Residues N264 and 321–323 (GIV) contribute to the substrate site.

It belongs to the succinate/malate CoA ligase beta subunit family. Heterotetramer of two alpha and two beta subunits. Mg(2+) serves as cofactor.

It catalyses the reaction succinate + ATP + CoA = succinyl-CoA + ADP + phosphate. It carries out the reaction GTP + succinate + CoA = succinyl-CoA + GDP + phosphate. The protein operates within carbohydrate metabolism; tricarboxylic acid cycle; succinate from succinyl-CoA (ligase route): step 1/1. Its function is as follows. Succinyl-CoA synthetase functions in the citric acid cycle (TCA), coupling the hydrolysis of succinyl-CoA to the synthesis of either ATP or GTP and thus represents the only step of substrate-level phosphorylation in the TCA. The beta subunit provides nucleotide specificity of the enzyme and binds the substrate succinate, while the binding sites for coenzyme A and phosphate are found in the alpha subunit. The sequence is that of Succinate--CoA ligase [ADP-forming] subunit beta from Haemophilus influenzae (strain PittEE).